The sequence spans 137 residues: Large ribosomal subunit protein uL16 (137 aa).

It belongs to the universal ribosomal protein uL16 family. As to quaternary structure, part of the 50S ribosomal subunit.

Functionally, binds 23S rRNA and is also seen to make contacts with the A and possibly P site tRNAs. This is Large ribosomal subunit protein uL16 from Legionella pneumophila (strain Paris).